A 303-amino-acid chain; its full sequence is Cysteine synthase B (303 aa).

Lysine 41 is subject to N6-(pyridoxal phosphate)lysine. Residues asparagine 71, 174–178, and serine 255 each bind pyridoxal 5'-phosphate; that span reads GTTGT.

It belongs to the cysteine synthase/cystathionine beta-synthase family. As to quaternary structure, homodimer. Requires pyridoxal 5'-phosphate as cofactor.

It catalyses the reaction O-acetyl-L-serine + hydrogen sulfide = L-cysteine + acetate. It participates in amino-acid biosynthesis; L-cysteine biosynthesis; L-cysteine from L-serine: step 2/2. Two cysteine synthase enzymes are found. Both catalyze the same reaction. Cysteine synthase B can also use thiosulfate in place of sulfide to give cysteine thiosulfonate as a product. The sequence is that of Cysteine synthase B (cysM) from Escherichia coli (strain K12).